Consider the following 72-residue polypeptide: Protein kish-A (72 aa).

The first 26 residues, 1–26 (MSAIFNFQSLLTVILLLICTCAYIRS), serve as a signal peptide directing secretion. Residues 27 to 53 (LAPSILDRNKTGLLGIFWKCARIGERK) lie on the Extracellular side of the membrane. A glycan (N-linked (GlcNAc...) asparagine) is linked at N35. The chain crosses the membrane as a helical span at residues 54-71 (SPYVAICCIVMAFSILFI). A topological domain (cytoplasmic) is located at residue Q72.

It belongs to the KISH family.

Its subcellular location is the golgi apparatus membrane. Its function is as follows. Involved in the early part of the secretory pathway. The sequence is that of Protein kish-A (Tmem167a) from Mus musculus (Mouse).